Here is a 279-residue protein sequence, read N- to C-terminus: Putative carbamate hydrolase RutD (279 aa).

The region spanning 23–126 (PVVVLISGLG…LVSVNGWLRI (104 aa)) is the AB hydrolase-1 domain.

The protein belongs to the AB hydrolase superfamily. Hydrolase RutD family.

It carries out the reaction carbamate + 2 H(+) = NH4(+) + CO2. In terms of biological role, involved in pyrimidine catabolism. May facilitate the hydrolysis of carbamate, a reaction that can also occur spontaneously. The chain is Putative carbamate hydrolase RutD from Escherichia coli O17:K52:H18 (strain UMN026 / ExPEC).